Here is a 270-residue protein sequence, read N- to C-terminus: NAD kinase (270 aa).

Asp45 acts as the Proton acceptor in catalysis. Residues Asp45–Gly46, Asn121–Glu122, Lys147, Asp149, Thr160–Ser165, and Ala184 contribute to the NAD(+) site.

This sequence belongs to the NAD kinase family. A divalent metal cation is required as a cofactor.

Its subcellular location is the cytoplasm. The catalysed reaction is NAD(+) + ATP = ADP + NADP(+) + H(+). In terms of biological role, involved in the regulation of the intracellular balance of NAD and NADP, and is a key enzyme in the biosynthesis of NADP. Catalyzes specifically the phosphorylation on 2'-hydroxyl of the adenosine moiety of NAD to yield NADP. This chain is NAD kinase, found in Lactobacillus johnsonii (strain CNCM I-12250 / La1 / NCC 533).